We begin with the raw amino-acid sequence, 243 residues long: Outer membrane protein A (243 aa).

A run of 5 beta stranded transmembrane segments spans residues 1–8, 13–21, 48–57, 62–69, and 88–96; these read LAAKLSYP, LDIYTRLGG, PLAAVGVEYA, WATRLDYQ, and MLSLGVSYR. A run of 5 repeats spans residues 104–105, 106–107, 108–109, 110–111, and 112–113. Residues 104-113 form a 5 X 2 AA tandem repeats of A-P region; sequence APAPAPAPAP. The 129-residue stretch at 115 to 243 folds into the OmpA-like domain; sequence VETKLFTLKS…RRVEIEVKGI (129 aa). An intrachain disulfide couples Cys-215 to Cys-229.

Belongs to the outer membrane OOP (TC 1.B.6) superfamily. OmpA family. Monomer and homodimer.

The protein resides in the cell outer membrane. Functionally, with TolR probably plays a role in maintaining the position of the peptidoglycan cell wall in the periplasm. Acts as a porin with low permeability that allows slow penetration of small solutes; an internal gate slows down solute passage. The sequence is that of Outer membrane protein A from Serratia odorifera.